A 508-amino-acid polypeptide reads, in one-letter code: ATP synthase subunit alpha, chloroplastic (508 aa).

Residue 170 to 177 (GDRQTGKT) coordinates ATP.

This sequence belongs to the ATPase alpha/beta chains family. As to quaternary structure, F-type ATPases have 2 components, F(1) - the catalytic core - and F(0) - the membrane proton channel. F(1) has five subunits: alpha(3), beta(3), gamma(1), delta(1), epsilon(1). F(0) has four main subunits: a(1), b(1), b'(1) and c(10-14). The alpha and beta chains form an alternating ring which encloses part of the gamma chain. F(1) is attached to F(0) by a central stalk formed by the gamma and epsilon chains, while a peripheral stalk is formed by the delta, b and b' chains.

It is found in the plastid. The protein localises to the chloroplast thylakoid membrane. The enzyme catalyses ATP + H2O + 4 H(+)(in) = ADP + phosphate + 5 H(+)(out). In terms of biological role, f(1)F(0) ATP synthase produces ATP from ADP in the presence of a proton or sodium gradient. F-type ATPases consist of two structural domains, F(1) containing the extramembraneous catalytic core and F(0) containing the membrane proton channel, linked together by a central stalk and a peripheral stalk. During catalysis, ATP synthesis in the catalytic domain of F(1) is coupled via a rotary mechanism of the central stalk subunits to proton translocation. The alpha chain is a regulatory subunit. This is ATP synthase subunit alpha, chloroplastic from Chlamydomonas reinhardtii (Chlamydomonas smithii).